We begin with the raw amino-acid sequence, 679 residues long: Tripartite terminase subunit 1 (679 aa).

Residues 180–208 (CIYCLNEHMMLPNQGESLPSLMMCVNCKH) form a C3H1-type zinc finger.

The protein belongs to the herpesviridae TRM1 protein family. Associates with TRM2 and TRM3 to form the tripartite terminase complex. Interacts with portal protein.

Its subcellular location is the host nucleus. In terms of biological role, component of the molecular motor that translocates viral genomic DNA in empty capsid during DNA packaging. Forms a tripartite terminase complex together with TRM2 and TRM3 in the host cytoplasm. Once the complex reaches the host nucleus, it interacts with the capsid portal vertex. This portal forms a ring in which genomic DNA is translocated into the capsid. TRM1 carries an endonuclease activity that plays an important role for the cleavage of concatemeric viral DNA into unit length genomes. In Saimiriine herpesvirus 2 (strain 11) (SaHV-2), this protein is Tripartite terminase subunit 1.